The primary structure comprises 539 residues: AT-rich interactive domain-containing protein 3A (539 aa).

Residues 1–190 (MKLQAVMETL…PLSGHPQLQD (190 aa)) are disordered. Over residues 55–73 (LKIQRAQAAALAAMRAAAA) the composition is skewed to low complexity. A compositionally biased stretch (acidic residues) spans 84 to 100 (SEEEDGESMASDEEDEK). A compositionally biased stretch (basic and acidic residues) spans 101–110 (ERDGESERYQ). Residues 113 to 141 (ASEEEDLKGKWDEDDFEDEGEDEYEDMEE) are compositionally biased toward acidic residues. Residues 161–173 (HSSQQAFPSQRSQ) show a composition bias toward polar residues. Residues 209-301 (DPKRKEFLDD…YLYPYECEKR (93 aa)) enclose the ARID domain. Residues 404–499 (AALEQLREKL…GVLFAQPPTS (96 aa)) form the REKLES domain. An important for nuclear localization region spans residues 405–448 (ALEQLREKLESGEPPEKKMALGSEEQQRIIQRTIQHNLLAMTAQ). A homodimerization region spans residues 450-471 (PMNIRINSQAEGRQDSAVNLTT). Positions 495 to 502 (QPPTSASG) are important for cytoplasmic localization. A compositionally biased stretch (polar residues) spans 497-512 (PTSASGTSKGSSNRTG). The tract at residues 497-539 (PTSASGTSKGSSNRTGSIGGGSSNSQAAPPSTPSAPNSNNPSP) is disordered. Residues 519–539 (SNSQAAPPSTPSAPNSNNPSP) are compositionally biased toward low complexity.

As to quaternary structure, homodimer.

It localises to the nucleus. Its subcellular location is the cytoplasm. Functionally, transcription factor required for smad1 and smad2-mediated responses to TGFbeta during mesoderm induction. The chain is AT-rich interactive domain-containing protein 3A (arid3a) from Xenopus laevis (African clawed frog).